The sequence spans 548 residues: Chaperonin GroEL (548 aa).

ATP is bound by residues 30–33 (TLGP), Lys51, 87–91 (DGTTT), Gly415, 479–481 (NAA), and Asp495. Residues 524–548 (LPKEDKSSDSSSSPAGGMGGMGGMM) form a disordered region. The span at 539–548 (GGMGGMGGMM) shows a compositional bias: gly residues.

The protein belongs to the chaperonin (HSP60) family. Forms a cylinder of 14 subunits composed of two heptameric rings stacked back-to-back. Interacts with the co-chaperonin GroES.

Its subcellular location is the cytoplasm. The enzyme catalyses ATP + H2O + a folded polypeptide = ADP + phosphate + an unfolded polypeptide.. In terms of biological role, together with its co-chaperonin GroES, plays an essential role in assisting protein folding. The GroEL-GroES system forms a nano-cage that allows encapsulation of the non-native substrate proteins and provides a physical environment optimized to promote and accelerate protein folding. The protein is Chaperonin GroEL of Buchnera aphidicola subsp. Acyrthosiphon pisum (strain Tuc7).